Here is a 426-residue protein sequence, read N- to C-terminus: Histidine--tRNA ligase (426 aa).

The protein belongs to the class-II aminoacyl-tRNA synthetase family. Homodimer.

The protein resides in the cytoplasm. The enzyme catalyses tRNA(His) + L-histidine + ATP = L-histidyl-tRNA(His) + AMP + diphosphate + H(+). In Streptococcus thermophilus (strain CNRZ 1066), this protein is Histidine--tRNA ligase.